A 167-amino-acid polypeptide reads, in one-letter code: Translation initiation factor IF-3 (167 aa).

It belongs to the IF-3 family. As to quaternary structure, monomer.

It localises to the cytoplasm. Functionally, IF-3 binds to the 30S ribosomal subunit and shifts the equilibrium between 70S ribosomes and their 50S and 30S subunits in favor of the free subunits, thus enhancing the availability of 30S subunits on which protein synthesis initiation begins. This is Translation initiation factor IF-3 from Shouchella clausii (strain KSM-K16) (Alkalihalobacillus clausii).